Consider the following 261-residue polypeptide: Syntaxin-7 (261 aa).

Position 2 is an N-acetylserine (Ser-2). Topologically, residues 2–238 are cytoplasmic; sequence SYTPGVGGDP…DYQRKSRKTL (237 aa). Thr-4 is subject to Phosphothreonine. Ser-45 is modified (phosphoserine). Residues 47–69 are a coiled coil; the sequence is ELRQQLQQKQQYTNQLAKETDKY. Ser-75 is subject to Phosphoserine. Thr-79 carries the phosphothreonine modification. Ser-125, Ser-126, Ser-129, and Ser-205 each carry phosphoserine. Positions 129–148 are disordered; that stretch reads SGSFPEDSSKERNLVSWESQ. Positions 165–227 constitute a t-SNARE coiled-coil homology domain; sequence LRLIHERESS…QQANQQLSRA (63 aa). A helical; Anchor for type IV membrane protein membrane pass occupies residues 239-259; the sequence is CIIILILVIGVAIISLIIWGL. At 260–261 the chain is on the vesicular side; sequence NH.

It belongs to the syntaxin family. In terms of assembly, forms a SNARE complex with VTI1B, STX8 and VAMP8 which functions in the homotypic fusion of late endosomes. Component of the SNARE complex composed of STX7, STX8, VAMP7 and VTI1B that is required for heterotypic fusion of late endosomes with lysosomes. Interacts with VPS11, VPS16 and VPS18. Interacts with VPS33A. Interacts with TPC1. As to expression, highest expression is found in placenta followed by heart, skeletal muscle, kidney and brain. Low expression is found in pancreas, lung and liver.

It is found in the early endosome membrane. Its function is as follows. May be involved in protein trafficking from the plasma membrane to the early endosome (EE) as well as in homotypic fusion of endocytic organelles. Mediates the endocytic trafficking from early endosomes to late endosomes and lysosomes. This Homo sapiens (Human) protein is Syntaxin-7 (STX7).